The chain runs to 72 residues: Metallothionein-like protein 1 (72 aa).

Belongs to the metallothionein superfamily. Type 15 family.

Its function is as follows. Metallothioneins have a high content of cysteine residues that bind various heavy metals. This chain is Metallothionein-like protein 1, found in Erythranthe guttata (Yellow monkey flower).